Here is a 262-residue protein sequence, read N- to C-terminus: Hydroxyethylthiazole kinase (262 aa).

M39 is a substrate binding site. ATP-binding residues include K115 and T160. Substrate is bound at residue G187.

It belongs to the Thz kinase family. Mg(2+) is required as a cofactor.

It catalyses the reaction 5-(2-hydroxyethyl)-4-methylthiazole + ATP = 4-methyl-5-(2-phosphooxyethyl)-thiazole + ADP + H(+). It functions in the pathway cofactor biosynthesis; thiamine diphosphate biosynthesis; 4-methyl-5-(2-phosphoethyl)-thiazole from 5-(2-hydroxyethyl)-4-methylthiazole: step 1/1. Catalyzes the phosphorylation of the hydroxyl group of 4-methyl-5-beta-hydroxyethylthiazole (THZ). This chain is Hydroxyethylthiazole kinase, found in Staphylococcus epidermidis (strain ATCC 12228 / FDA PCI 1200).